The following is a 514-amino-acid chain: Probable WRKY transcription factor 4 (514 aa).

3 disordered regions span residues 1-28, 175-204, and 278-394; these read MSEK…PPRP, QPQT…PLPA, and YKGQ…TVTE. 2 stretches are compositionally biased toward polar residues: residues 185-198 and 286-299; these read QVQS…QIPT and PPQN…DNTA. Positions 223 to 287 form a DNA-binding region, WRKY 1; that stretch reads NVDKPADDGY…YKGQHNHEPP (65 aa). Positions 300–313 are enriched in low complexity; the sequence is NINGSSINNNRGSS. The span at 315–326 shows a compositional bias: polar residues; sequence LGASQFQTNSSN. Residues 359–380 show a composition bias toward basic and acidic residues; it reads TDVREKDENEPDPKRRSTEVRI. Residues 403-468 constitute a DNA-binding region (WRKY 2); it reads SEVDLLDDGY…YEGKHNHDLP (66 aa). Zn(2+)-binding residues include C434, T436, C439, H463, and H465. A disordered region spans residues 464-514; sequence NHDLPAAKSSSHAAAAAQLRPDNRPGGLANLNQQQQQQPVARLRLKEEQTT. Low complexity predominate over residues 469-480; the sequence is AAKSSSHAAAAA.

In terms of tissue distribution, in young, mature and senescent leaves.

It localises to the nucleus. Functionally, transcription factor that binds specifically to the W box (5'-(T)TGAC[CT]-3'), a frequently occurring elicitor-responsive cis-acting element. Has a positive role in resistance to necrotrophic pathogens (e.g. Botrytis cinerea), but a negative effect on plant resistance to biotrophic pathogens (e.g. Pseudomonas syringae). This Arabidopsis thaliana (Mouse-ear cress) protein is Probable WRKY transcription factor 4 (WRKY4).